A 313-amino-acid chain; its full sequence is MSQEFAHLSVLLAETVGGLNIKDDGIYIDGTFGRGGHSRQILQRLGDNGRLIAIDRDPQAIEAAKQFSDDPRFQIVHGGFGQLADYVEDLGLVGKIDGVLLDLGVSSPQLDDAERGFSFLRDGPLDMRMDNSQGQTAAQWLAHAEIEDMAWVFKTYGEEKNARHIARCIAADRDKTPFLRTKDLADLIARITKNKERNKHPATRVFQAIRIYINSELDQIDQALEGALAVLAPQGRLSIISFHSLEDRIVKRFIRRHSQGESVPYGLPITEDQINKSRKLRAIGKAIMPSDEEIERNARARSSVLRIAERLDY.

Residues 35 to 37 (GGH), Asp55, Phe80, Asp102, and Gln109 contribute to the S-adenosyl-L-methionine site.

The protein belongs to the methyltransferase superfamily. RsmH family.

Its subcellular location is the cytoplasm. It catalyses the reaction cytidine(1402) in 16S rRNA + S-adenosyl-L-methionine = N(4)-methylcytidine(1402) in 16S rRNA + S-adenosyl-L-homocysteine + H(+). Its function is as follows. Specifically methylates the N4 position of cytidine in position 1402 (C1402) of 16S rRNA. This Shewanella putrefaciens (strain CN-32 / ATCC BAA-453) protein is Ribosomal RNA small subunit methyltransferase H.